The chain runs to 262 residues: Lysine 5,6-aminomutase beta subunit (262 aa).

The B12-binding domain maps to 120 to 262 (KIVVVGASTG…VKTLNDRMNS (143 aa)). Adenosylcob(III)alamin contacts are provided by residues 130 to 136 (TDAHTVG) and His-133. Lys-144 is modified (N6-(pyridoxal phosphate)lysine). Adenosylcob(III)alamin contacts are provided by residues 185 to 192 (LVSQTVTQ), 219 to 223 (LCGGP), and 239 to 244 (FGPGRF).

It belongs to the KamE family. As to quaternary structure, heterotetramer of 2 alpha and 2 beta subunits. Requires adenosylcob(III)alamin as cofactor. It depends on pyridoxal 5'-phosphate as a cofactor.

It catalyses the reaction (3S)-3,6-diaminohexanoate = (3S,5S)-3,5-diaminohexanoate. The enzyme catalyses D-lysine = (2R,5S)-2,5-diaminohexanoate. The protein operates within amino-acid metabolism; lysine degradation. Its activity is regulated as follows. Rapidly inactivated in the presence of D-lysine and to a lesser extent in the absence of adenosylcobalamin (Adocbl). Activity is stable in the presence of Adocbl when D-lysine is absent. Adocbl imparts thermal stability at 37 degrees Celsius. In terms of biological role, catalyzes the migration of the L-beta-lysine and D-lysine epsilon amino group to the delta carbon to produce 3,5-diaminohexanoate and 2,5-diaminohexanoate, respectively. This is Lysine 5,6-aminomutase beta subunit (kamE) from Acetoanaerobium sticklandii (strain ATCC 12662 / DSM 519 / JCM 1433 / CCUG 9281 / NCIMB 10654 / HF) (Clostridium sticklandii).